Consider the following 411-residue polypeptide: Methylthioribose-1-phosphate isomerase (411 aa).

Asp284 functions as the Proton donor in the catalytic mechanism.

It belongs to the eIF-2B alpha/beta/delta subunits family. MtnA subfamily.

Its subcellular location is the cytoplasm. The protein resides in the nucleus. The enzyme catalyses 5-(methylsulfanyl)-alpha-D-ribose 1-phosphate = 5-(methylsulfanyl)-D-ribulose 1-phosphate. Its pathway is amino-acid biosynthesis; L-methionine biosynthesis via salvage pathway; L-methionine from S-methyl-5-thio-alpha-D-ribose 1-phosphate: step 1/6. Functionally, catalyzes the interconversion of methylthioribose-1-phosphate (MTR-1-P) into methylthioribulose-1-phosphate (MTRu-1-P). In Komagataella phaffii (strain GS115 / ATCC 20864) (Yeast), this protein is Methylthioribose-1-phosphate isomerase.